A 425-amino-acid chain; its full sequence is MEKLVVHGGFTLRGAVNISGSKNASLPILAASLLTDEPVVVRRVPDVSDTNFMVQIMGQLGASVERSSGNVRVEARNLHSEAAYEQVRKMRASICLMGPLMARMQRCVIPLPGGCVIGDRPVDLHIRAIQALGAQVQIERGNLIIEAPRGLKGATVDLSGDHGPTVLGTDNLMMAAVLAEGTTVIESAASEPEVVDLANFLTKMGANIQGAGTRRIVIEGVEKLRGCNHTVIPDRIEAGTFMVAAAMMGDGVTLRRVCEEHMTVVTDLLRKCGHHVEFNERGDTVTIIAGKTPKCGEIKTAPYPGYPTDMQAQMTALFATTPGISVVKDTIFPQRFMHCSELKRMGADIKVDNGTAVISGVETLSGAPVMASDLRASAALVLAALKAEGTTEIHRLYHIDRGYEMIDEKLLAIGAAVERLPDDDN.

Residue 22–23 (KN) coordinates phosphoenolpyruvate. R91 provides a ligand contact to UDP-N-acetyl-alpha-D-glucosamine. C115 (proton donor) is an active-site residue. C115 bears the 2-(S-cysteinyl)pyruvic acid O-phosphothioketal mark. Residues 120–124 (RPVDL), D309, and I331 each bind UDP-N-acetyl-alpha-D-glucosamine.

It belongs to the EPSP synthase family. MurA subfamily.

The protein resides in the cytoplasm. It catalyses the reaction phosphoenolpyruvate + UDP-N-acetyl-alpha-D-glucosamine = UDP-N-acetyl-3-O-(1-carboxyvinyl)-alpha-D-glucosamine + phosphate. It functions in the pathway cell wall biogenesis; peptidoglycan biosynthesis. Cell wall formation. Adds enolpyruvyl to UDP-N-acetylglucosamine. The chain is UDP-N-acetylglucosamine 1-carboxyvinyltransferase from Akkermansia muciniphila (strain ATCC BAA-835 / DSM 22959 / JCM 33894 / BCRC 81048 / CCUG 64013 / CIP 107961 / Muc).